The following is a 287-amino-acid chain: Probable aquaporin PIP1-5 (287 aa).

Methionine 1 is subject to N-acetylmethionine. Residues 1–34 (MEGKEEDVNVGANKFPERQPIGTAAQTESKDYKE) are disordered. Over 1–55 (MEGKEEDVNVGANKFPERQPIGTAAQTESKDYKEPPPAPFFEPGELKSWSFYRAG) the chain is Cytoplasmic. Residues 56 to 76 (IAEFIATFLFLYVTVLTVMGV) traverse the membrane as a helical segment. The Extracellular segment spans residues 77 to 92 (KRAPNMCASVGIQGIA). The chain crosses the membrane as a helical span at residues 93 to 113 (WAFGGMIFALVYCTAGISGGH). Over 114-133 (INPAVTFGLFLARKLSLTRA) the chain is Cytoplasmic. The short motif at 115-117 (NPA) is the NPA 1 element. The helical transmembrane segment at 134 to 154 (LFYIVMQCLGAICGAGVVKGF) threads the bilayer. The Extracellular portion of the chain corresponds to 155-175 (QPGLYQTNGGGANVVAHGYTK). The chain crosses the membrane as a helical span at residues 176-196 (GSGLGAEIVGTFVLVYTVFSA). Topologically, residues 197-209 (TDAKRSARDSHVP) are cytoplasmic. The helical transmembrane segment at 210–230 (ILAPLPIGFAVFLVHLATIPI) threads the bilayer. Residues 231 to 257 (TGTGINPARSLGAAIIYNKDHAWDDHW) lie on the Extracellular side of the membrane. An NPA 2 motif is present at residues 236-238 (NPA). A helical membrane pass occupies residues 258–278 (IFWVGPFIGAALAALYHQIVI). Residues 279 to 287 (RAIPFKSKT) lie on the Cytoplasmic side of the membrane. Phosphoserine is present on serine 285.

Belongs to the MIP/aquaporin (TC 1.A.8) family. PIP (TC 1.A.8.11) subfamily. In terms of tissue distribution, predominantly expressed in green siliques. Also expressed above ground, in roots and flower buds.

Its subcellular location is the cell membrane. Its function is as follows. Aquaporins facilitate the transport of water and small neutral solutes across cell membranes. This is Probable aquaporin PIP1-5 (PIP1-5) from Arabidopsis thaliana (Mouse-ear cress).